An 842-amino-acid polypeptide reads, in one-letter code: Alanine--tRNA ligase (842 aa).

Zn(2+) contacts are provided by His-549, His-553, Cys-650, and His-654.

This sequence belongs to the class-II aminoacyl-tRNA synthetase family. The cofactor is Zn(2+).

The protein resides in the cytoplasm. The catalysed reaction is tRNA(Ala) + L-alanine + ATP = L-alanyl-tRNA(Ala) + AMP + diphosphate. In terms of biological role, catalyzes the attachment of alanine to tRNA(Ala) in a two-step reaction: alanine is first activated by ATP to form Ala-AMP and then transferred to the acceptor end of tRNA(Ala). Also edits incorrectly charged Ser-tRNA(Ala) and Gly-tRNA(Ala) via its editing domain. This chain is Alanine--tRNA ligase, found in Campylobacter jejuni subsp. jejuni serotype O:2 (strain ATCC 700819 / NCTC 11168).